We begin with the raw amino-acid sequence, 478 residues long: MLYEKFEYNINNLIGNFSLSKISIAVSGGSDSVALLYLANIWAEKNNIELFVISVDHNLREQSKQETHYIQNISNSLNRKHYSLSFDHQNNFSNLQERAREGRYDLMTNLCLELDILVLLTAHHEDDYVENFCLRLERNSGIFGLSSSNINWYNNIHIIRPLYNIPKSELVEYLVSHNIKWFEDESNSSDKYRRNVIRQKLAKGADYIRHFSKPVYREEFKGDTERSTAAYTSVREDASTGTASKLSLEAKCGKMSKAAIISQQLKTNKRIENEFKPELISAIAEAVKIFEYGFAFLDLVKFDKFSNEVKVQIINFLLIIISGQSRAARFYSVEPILKLITQDVNFKNTLHGCIIKRIQNELLIYREFGKKLPESKILLDKSVIWDNRFCITKNQEAPNCFVTHLSLKDYKIIKKQLDLEPLKNLSCKNHNAVLLTLPIIKILEKVIAIPHISYYDNDMWNFEVSFSPNFVSRFTHFC.

27–32 (SGGSDS) serves as a coordination point for ATP.

The protein belongs to the tRNA(Ile)-lysidine synthase family.

Its subcellular location is the cytoplasm. The enzyme catalyses cytidine(34) in tRNA(Ile2) + L-lysine + ATP = lysidine(34) in tRNA(Ile2) + AMP + diphosphate + H(+). In terms of biological role, ligates lysine onto the cytidine present at position 34 of the AUA codon-specific tRNA(Ile) that contains the anticodon CAU, in an ATP-dependent manner. Cytidine is converted to lysidine, thus changing the amino acid specificity of the tRNA from methionine to isoleucine. In Rickettsia rickettsii (strain Iowa), this protein is tRNA(Ile)-lysidine synthase.